The following is a 102-amino-acid chain: MKIVVVGGGTSGLLSALALEKEGHDVLVLEKDKVGGLCRSENIDGYTVDIGVHAITMLNDGPLTRLLNNYARYIPNFREYGDYYVRTDKLQKIPVSMNEWMT.

This is an uncharacterized protein from Methanothermococcus thermolithotrophicus (Methanococcus thermolithotrophicus).